Reading from the N-terminus, the 881-residue chain is Phosphoenolpyruvate carboxylase (881 aa).

Residues H142 and K547 contribute to the active site.

This sequence belongs to the PEPCase type 1 family. Mg(2+) is required as a cofactor.

It carries out the reaction oxaloacetate + phosphate = phosphoenolpyruvate + hydrogencarbonate. Its function is as follows. Forms oxaloacetate, a four-carbon dicarboxylic acid source for the tricarboxylic acid cycle. The polypeptide is Phosphoenolpyruvate carboxylase (Hahella chejuensis (strain KCTC 2396)).